We begin with the raw amino-acid sequence, 370 residues long: tRNA-specific 2-thiouridylase MnmA (370 aa).

ATP contacts are provided by residues 12-19 (GMSGGVDS) and L38. The Nucleophile role is filled by C105. A disulfide bridge connects residues C105 and C204. G129 provides a ligand contact to ATP. The interaction with tRNA stretch occupies residues 153–155 (KDQ). The active-site Cysteine persulfide intermediate is the C204. Positions 310 to 311 (RY) are interaction with tRNA.

It belongs to the MnmA/TRMU family.

It localises to the cytoplasm. The enzyme catalyses S-sulfanyl-L-cysteinyl-[protein] + uridine(34) in tRNA + AH2 + ATP = 2-thiouridine(34) in tRNA + L-cysteinyl-[protein] + A + AMP + diphosphate + H(+). In terms of biological role, catalyzes the 2-thiolation of uridine at the wobble position (U34) of tRNA, leading to the formation of s(2)U34. The sequence is that of tRNA-specific 2-thiouridylase MnmA from Desulfitobacterium hafniense (strain Y51).